The sequence spans 372 residues: Envelope phospholipase OPG057 (372 aa).

The YPPL signature appears at 153-156; sequence YPPL. S-palmitoyl cysteine; by host attachment occurs at residues Cys-185 and Cys-186. In terms of domain architecture, PLD phosphodiesterase spans 307-334; that stretch reads FTIQNNTKLLIVDDEYVHITSANFDGTH.

The protein belongs to the orthopoxvirus OPG057 family. In terms of assembly, interacts with protein OPG190. In terms of processing, palmitoylated. Attachment of the palmitate moiety is essential for correct intracellular targeting and protein function.

It localises to the virion membrane. The protein localises to the host Golgi apparatus. It is found in the host trans-Golgi network. The protein resides in the host endoplasmic reticulum membrane. It catalyses the reaction a 1,2-diacyl-sn-glycero-3-phosphocholine + H2O = a 1,2-diacyl-sn-glycero-3-phosphate + choline + H(+). Major envelope protein that plays a role in the biogenesis of the viral double membrane and in egress of virus from the host cell. Produces the wrapped form of virus that is required for cell-to-cell spread. Acts as a lipase with broad specificity including phospholipase C, phospholipase A, and triacylglycerol lipase activities. The protein is Envelope phospholipase OPG057 (OPG057) of Variola virus (isolate Human/India/Ind3/1967) (VARV).